A 71-amino-acid chain; its full sequence is Small ribosomal subunit protein bS21 (71 aa).

The span at 49–59 (KAAAVKRAAKK) shows a compositional bias: basic residues. Positions 49–71 (KAAAVKRAAKKVSRENARRVRMY) are disordered. Basic and acidic residues predominate over residues 60–71 (VSRENARRVRMY).

It belongs to the bacterial ribosomal protein bS21 family.

The chain is Small ribosomal subunit protein bS21 from Colwellia psychrerythraea (strain 34H / ATCC BAA-681) (Vibrio psychroerythus).